The sequence spans 452 residues: MPEAVSDGLFDVPGVPMTSGHDLGASAGAPLAVRMRPASLDEVVGQDHLLAPGSPLRRLVEGSGVASVILYGPPGSGKTTLAALISQATGRRFEALSALSAGVKEVRAVIENSRKALLHGEQTVLFIDEVHRFSKTQQDALLSAVEHRVVLLVAATTENPSFSVVAPLLSRSLILQLRPLTAEDTRAVVQRAIDDPRGLGRAVAVAPEAVDLLVQLAAGDARRALTALEVAAEAAQAAGELVSVQTIERSVDKAAVRYDRDGDQHYDVVSAFIKSVRGSDVDAALHYLARMLVAGEDPRFIARRLMILASEDIGMAGPSALQVAVAAAQTVALIGMPEAQLTLAHATIHLATAPKSNAVTTALAAAMNDIKAGKAGLVPAHLRDGHYSGAAALGNAQGYKYSHDDPDGVVAQQYPPDELVDVDYYRPTGRGGEREIAGRLDRLRAIIRKKRG.

Residue G72–T79 participates in ATP binding.

It belongs to the AAA ATPase family. RarA/MGS1/WRNIP1 subfamily.

This is an uncharacterized protein from Mycobacterium tuberculosis (strain ATCC 25618 / H37Rv).